The chain runs to 291 residues: Small ribosomal subunit biogenesis GTPase RsgA (291 aa).

Residues 63 to 221 (NNELKRPPVS…IADTPGFSAL (159 aa)) enclose the CP-type G domain. GTP-binding positions include 112-115 (TKHD) and 164-172 (GQSGVGKST). Zn(2+) contacts are provided by Cys245, Cys250, His252, and Cys258.

Belongs to the TRAFAC class YlqF/YawG GTPase family. RsgA subfamily. Monomer. Associates with 30S ribosomal subunit, binds 16S rRNA. The cofactor is Zn(2+).

The protein localises to the cytoplasm. One of several proteins that assist in the late maturation steps of the functional core of the 30S ribosomal subunit. Helps release RbfA from mature subunits. May play a role in the assembly of ribosomal proteins into the subunit. Circularly permuted GTPase that catalyzes slow GTP hydrolysis, GTPase activity is stimulated by the 30S ribosomal subunit. This chain is Small ribosomal subunit biogenesis GTPase RsgA, found in Staphylococcus epidermidis (strain ATCC 12228 / FDA PCI 1200).